A 199-amino-acid polypeptide reads, in one-letter code: NADH-quinone oxidoreductase subunit I (199 aa).

2 4Fe-4S ferredoxin-type domains span residues 45–75 and 91–120; these read LNRH…VEGA and RVYQ…MSNE. 8 residues coordinate [4Fe-4S] cluster: Cys55, Cys58, Cys61, Cys65, Cys100, Cys103, Cys106, and Cys110. A disordered region spans residues 164-199; it reads GTPAAHMLSGEDDAASETTLDRSDDHSATYEEAERP. Positions 182–199 are enriched in basic and acidic residues; sequence TLDRSDDHSATYEEAERP.

The protein belongs to the complex I 23 kDa subunit family. As to quaternary structure, NDH-1 is composed of 14 different subunits. Subunits NuoA, H, J, K, L, M, N constitute the membrane sector of the complex. [4Fe-4S] cluster serves as cofactor.

It localises to the cell membrane. It catalyses the reaction a quinone + NADH + 5 H(+)(in) = a quinol + NAD(+) + 4 H(+)(out). In terms of biological role, NDH-1 shuttles electrons from NADH, via FMN and iron-sulfur (Fe-S) centers, to quinones in the respiratory chain. The immediate electron acceptor for the enzyme in this species is believed to be ubiquinone. Couples the redox reaction to proton translocation (for every two electrons transferred, four hydrogen ions are translocated across the cytoplasmic membrane), and thus conserves the redox energy in a proton gradient. This Acidothermus cellulolyticus (strain ATCC 43068 / DSM 8971 / 11B) protein is NADH-quinone oxidoreductase subunit I.